A 157-amino-acid chain; its full sequence is Crossover junction endodeoxyribonuclease RuvC (157 aa).

Residues Asp-7, Glu-66, and Asp-139 contribute to the active site. 3 residues coordinate Mg(2+): Asp-7, Glu-66, and Asp-139.

The protein belongs to the RuvC family. Homodimer which binds Holliday junction (HJ) DNA. The HJ becomes 2-fold symmetrical on binding to RuvC with unstacked arms; it has a different conformation from HJ DNA in complex with RuvA. In the full resolvosome a probable DNA-RuvA(4)-RuvB(12)-RuvC(2) complex forms which resolves the HJ. Mg(2+) serves as cofactor.

Its subcellular location is the cytoplasm. It carries out the reaction Endonucleolytic cleavage at a junction such as a reciprocal single-stranded crossover between two homologous DNA duplexes (Holliday junction).. Functionally, the RuvA-RuvB-RuvC complex processes Holliday junction (HJ) DNA during genetic recombination and DNA repair. Endonuclease that resolves HJ intermediates. Cleaves cruciform DNA by making single-stranded nicks across the HJ at symmetrical positions within the homologous arms, yielding a 5'-phosphate and a 3'-hydroxyl group; requires a central core of homology in the junction. The consensus cleavage sequence is 5'-(A/T)TT(C/G)-3'. Cleavage occurs on the 3'-side of the TT dinucleotide at the point of strand exchange. HJ branch migration catalyzed by RuvA-RuvB allows RuvC to scan DNA until it finds its consensus sequence, where it cleaves and resolves the cruciform DNA. This is Crossover junction endodeoxyribonuclease RuvC from Helicobacter pylori (strain Shi470).